Reading from the N-terminus, the 405-residue chain is Na(+)-translocating NADH-quinone reductase subunit F (405 aa).

Residues 3 to 23 form a helical membrane-spanning segment; sequence IILGIVMFTVIVLVLALMILF. The 2Fe-2S ferredoxin-type domain maps to 32–124; it reads GDITIKVNGE…DMDIEVPEEV (93 aa). Residues Cys-67, Cys-73, Cys-76, and Cys-108 each contribute to the [2Fe-2S] cluster site. The FAD-binding FR-type domain occupies 127–267; it reads VKKWECTVIS…SGPFGEFFAK (141 aa).

Belongs to the NqrF family. Composed of six subunits; NqrA, NqrB, NqrC, NqrD, NqrE and NqrF. Requires [2Fe-2S] cluster as cofactor. FAD serves as cofactor.

It localises to the cell inner membrane. It carries out the reaction a ubiquinone + n Na(+)(in) + NADH + H(+) = a ubiquinol + n Na(+)(out) + NAD(+). NQR complex catalyzes the reduction of ubiquinone-1 to ubiquinol by two successive reactions, coupled with the transport of Na(+) ions from the cytoplasm to the periplasm. The first step is catalyzed by NqrF, which accepts electrons from NADH and reduces ubiquinone-1 to ubisemiquinone by a one-electron transfer pathway. This chain is Na(+)-translocating NADH-quinone reductase subunit F, found in Neisseria meningitidis serogroup C / serotype 2a (strain ATCC 700532 / DSM 15464 / FAM18).